Consider the following 207-residue polypeptide: 8-oxoguanine DNA glycosylase/AP lyase (207 aa).

Active-site residues include K128 and D146.

It belongs to the type-2 OGG1 family.

It carries out the reaction 2'-deoxyribonucleotide-(2'-deoxyribose 5'-phosphate)-2'-deoxyribonucleotide-DNA = a 3'-end 2'-deoxyribonucleotide-(2,3-dehydro-2,3-deoxyribose 5'-phosphate)-DNA + a 5'-end 5'-phospho-2'-deoxyribonucleoside-DNA + H(+). Catalyzes the excision of an oxidatively damaged form of guanine (7,8-dihydro-8-oxoguanine = 8-oxoG) from DNA. Also cleaves the DNA backbone at apurinic/apyrimidinic sites (AP sites). This is 8-oxoguanine DNA glycosylase/AP lyase from Saccharolobus solfataricus (strain ATCC 35092 / DSM 1617 / JCM 11322 / P2) (Sulfolobus solfataricus).